The sequence spans 180 residues: MTLKELVVGFGTQVRSLWMIGLHAFAKRETKMYPEEPVYLPPRYRGRIVLTRDPDGAERCVACNLCAVACPVGCISLQKAETEDGRWYPEFFRINFSRCIFCGMCEEACPTTALQLTPDFEMGEFRRQDLVYEKEDLLISGPGKYPDYNFYRMAGMAIDGKAKGEAENEAKPIDVKGLLP.

2 4Fe-4S ferredoxin-type domains span residues 48–80 (IVLT…LQKA) and 90–119 (EFFR…LTPD). Positions 60, 63, 66, 70, 99, 102, 105, and 109 each coordinate [4Fe-4S] cluster.

This sequence belongs to the complex I 23 kDa subunit family. In terms of assembly, NDH-1 is composed of 13 different subunits. Subunits NuoA, H, J, K, L, M, N constitute the membrane sector of the complex. [4Fe-4S] cluster is required as a cofactor.

It is found in the cell inner membrane. The enzyme catalyses a quinone + NADH + 5 H(+)(in) = a quinol + NAD(+) + 4 H(+)(out). Functionally, NDH-1 shuttles electrons from NADH, via FMN and iron-sulfur (Fe-S) centers, to quinones in the respiratory chain. The immediate electron acceptor for the enzyme in this species is believed to be ubiquinone. Couples the redox reaction to proton translocation (for every two electrons transferred, four hydrogen ions are translocated across the cytoplasmic membrane), and thus conserves the redox energy in a proton gradient. In Edwardsiella ictaluri (strain 93-146), this protein is NADH-quinone oxidoreductase subunit I.